The chain runs to 1690 residues: DNA-directed RNA polymerase subunit beta' (1690 aa).

Positions 63, 65, 78, and 81 each coordinate Zn(2+). Mg(2+) is bound by residues Asp753, Asp755, and Asp757. Residues Cys1107, Cys1295, Cys1302, and Cys1305 each coordinate Zn(2+).

It belongs to the RNA polymerase beta' chain family. As to quaternary structure, the RNAP catalytic core consists of 2 alpha, 1 beta, 1 beta' and 1 omega subunit. When a sigma factor is associated with the core the holoenzyme is formed, which can initiate transcription. Requires Mg(2+) as cofactor. Zn(2+) is required as a cofactor.

It carries out the reaction RNA(n) + a ribonucleoside 5'-triphosphate = RNA(n+1) + diphosphate. Functionally, DNA-dependent RNA polymerase catalyzes the transcription of DNA into RNA using the four ribonucleoside triphosphates as substrates. The protein is DNA-directed RNA polymerase subunit beta' of Thermotoga neapolitana (strain ATCC 49049 / DSM 4359 / NBRC 107923 / NS-E).